We begin with the raw amino-acid sequence, 239 residues long: Pyridoxine 5'-phosphate synthase (239 aa).

Asn7 is a 3-amino-2-oxopropyl phosphate binding site. 9–10 lines the 1-deoxy-D-xylulose 5-phosphate pocket; the sequence is DH. Arg18 is a 3-amino-2-oxopropyl phosphate binding site. His43 (proton acceptor) is an active-site residue. Residues Arg45 and His50 each coordinate 1-deoxy-D-xylulose 5-phosphate. Catalysis depends on Glu70, which acts as the Proton acceptor. Residue Thr100 coordinates 1-deoxy-D-xylulose 5-phosphate. His191 functions as the Proton donor in the catalytic mechanism. Residues Gly192 and 213 to 214 contribute to the 3-amino-2-oxopropyl phosphate site; that span reads GH.

The protein belongs to the PNP synthase family. In terms of assembly, homooctamer; tetramer of dimers.

It localises to the cytoplasm. The enzyme catalyses 3-amino-2-oxopropyl phosphate + 1-deoxy-D-xylulose 5-phosphate = pyridoxine 5'-phosphate + phosphate + 2 H2O + H(+). The protein operates within cofactor biosynthesis; pyridoxine 5'-phosphate biosynthesis; pyridoxine 5'-phosphate from D-erythrose 4-phosphate: step 5/5. In terms of biological role, catalyzes the complicated ring closure reaction between the two acyclic compounds 1-deoxy-D-xylulose-5-phosphate (DXP) and 3-amino-2-oxopropyl phosphate (1-amino-acetone-3-phosphate or AAP) to form pyridoxine 5'-phosphate (PNP) and inorganic phosphate. In Geobacter sulfurreducens (strain ATCC 51573 / DSM 12127 / PCA), this protein is Pyridoxine 5'-phosphate synthase.